Consider the following 178-residue polypeptide: GTP-dependent dephospho-CoA kinase (178 aa).

Residues D43, I44, V45, D62, K64, and E120 each coordinate GTP.

Belongs to the GTP-dependent DPCK family.

The catalysed reaction is 3'-dephospho-CoA + GTP = GDP + CoA + H(+). It functions in the pathway cofactor biosynthesis; coenzyme A biosynthesis. Functionally, catalyzes the GTP-dependent phosphorylation of the 3'-hydroxyl group of dephosphocoenzyme A to form coenzyme A (CoA). This Natronomonas pharaonis (strain ATCC 35678 / DSM 2160 / CIP 103997 / JCM 8858 / NBRC 14720 / NCIMB 2260 / Gabara) (Halobacterium pharaonis) protein is GTP-dependent dephospho-CoA kinase.